Reading from the N-terminus, the 116-residue chain is Large ribosomal subunit protein uL18 (116 aa).

It belongs to the universal ribosomal protein uL18 family. Part of the 50S ribosomal subunit; part of the 5S rRNA/L5/L18/L25 subcomplex. Contacts the 5S and 23S rRNAs.

Functionally, this is one of the proteins that bind and probably mediate the attachment of the 5S RNA into the large ribosomal subunit, where it forms part of the central protuberance. This chain is Large ribosomal subunit protein uL18, found in Hahella chejuensis (strain KCTC 2396).